The primary structure comprises 441 residues: Amino-acid acetyltransferase (441 aa).

Residues 295–434 enclose the N-acetyltransferase domain; that stretch reads EQVRRATIND…QALYNYQRRS (140 aa).

This sequence belongs to the acetyltransferase family. ArgA subfamily. As to quaternary structure, homohexamer.

Its subcellular location is the cytoplasm. It catalyses the reaction L-glutamate + acetyl-CoA = N-acetyl-L-glutamate + CoA + H(+). It participates in amino-acid biosynthesis; L-arginine biosynthesis; N(2)-acetyl-L-ornithine from L-glutamate: step 1/4. The sequence is that of Amino-acid acetyltransferase from Pectobacterium carotovorum subsp. carotovorum (strain PC1).